Consider the following 768-residue polypeptide: Mitochondrial 15S rRNA processing factor CCM1 (768 aa).

The N-terminal 90 residues, 1 to 90 (MIRLIRWNNV…RSFTKVIAQH (90 aa)), are a transit peptide targeting the mitochondrion. Disordered regions lie at residues 28 to 65 (NKRKRRIPPSKPRSSNRKDGDIEPYRMTDQNQTPNTGS) and 90 to 114 (HLKPEQENDSLTSAEKPDTSQLPPI). Positions 43–53 (NRKDGDIEPYR) are enriched in basic and acidic residues. Positions 55–65 (TDQNQTPNTGS) are enriched in polar residues. 5 PPR repeats span residues 274-308 (KIDHYETMILAYVKNNHMEKIDGILAQMKKKNIEI), 309-344 (SKMIYTSIVRGYIFYQKDHQRALDTFDSMKFLSQKT), 347-381 (DEKVYTDVIVSCVMHREIERALDLYYELKDKGMNV), 382-417 (NQNLLSTLAKGCSRSKQFKTQAWNFLFQVYDHGWVP), and 418-452 (NLQTYEHMLYIAARDGDVELTRVLFYKMLQTNSVT). Positions 583–596 (IEPRQDEPTEKATT) are enriched in basic and acidic residues. Residues 583-609 (IEPRQDEPTEKATTTEEQNASSETDNN) form a disordered region. Over residues 597 to 609 (TEEQNASSETDNN) the composition is skewed to polar residues. Residues 634–664 (DSYLYNLAIKAAGKFKNYGFAQEILHERGQF) form a PPR 6 repeat.

This sequence belongs to the CCM1 family. In terms of assembly, binds to mitochondrial small subunit 15S rRNA.

It is found in the mitochondrion. Regulates mitochondrial small subunit maturation by controlling 15S rRNA 5'-end processing. Localizes to the 5' precursor of the 15S rRNA in a position that is subsequently occupied by mS47 in the mature yeast mtSSU. Uses structure and sequence-specific RNA recognition, binding to a single-stranded region of the precursor and specifically recognizing bases -6 to -1. The exchange of Ccm1 for mS47 is coupled to the irreversible removal of precursor rRNA that is accompanied by conformational changes of the mitoribosomal proteins uS5m and mS26. These conformational changes signal completion of 5'-end rRNA processing through protection of the mature 5'-end of the 15S rRNA and stabilization of mS47. The removal of the 5' precursor together with the dissociation of Ccm1 may be catalyzed by the 5'-3' exoribonuclease Pet127. Involved in the specific removal of group I introns in mitochondrial encoded transcripts. This Candida albicans (strain SC5314 / ATCC MYA-2876) (Yeast) protein is Mitochondrial 15S rRNA processing factor CCM1 (CCM1).